Consider the following 541-residue polypeptide: Sorting nexin-27 (541 aa).

The segment at 1-26 is disordered; the sequence is MADEDGEGIHPAAPHRNGGGGGGGGS. A compositionally biased stretch (gly residues) spans 17–26; it reads NGGGGGGGGS. One can recognise a PDZ domain in the interval 43 to 136; that stretch reads VVRIVKSESG…ELILTVLSVP (94 aa). Residues S51 and S62 each carry the phosphoserine modification. Residues 161–269 form the PX domain; sequence QAVPISVPTY…EFLSESDENY (109 aa). Positions 273–362 constitute a Ras-associating domain; it reads SDVELRVALP…TCLTIRKWLF (90 aa). Residues 273 to 362 are FERM-like region F1; sequence SDVELRVALP…TCLTIRKWLF (90 aa). The interval 373–421 is FERM-like region F2; that stretch reads NDLAVTYFFHQAVDDVKKGYIKAEEKSYQLQKLYEQRKMVMYLNMLRTC. Residues 425-525 are FERM-like region F3; sequence NEIIFPHCAC…RVFCELKWRK (101 aa).

As to quaternary structure, core component of the SNX27-retromer, a multiprotein complex composed of SNX27, the WASH complex and the retromer complex. Interacts (via PDZ domain) with a number of target transmembrane proteins (via PDZ-binding motif): ABCC4, ADRB2, ARHGEF7, GRIA1, GRIA2, GRIN1, GRIN2A GRIN2C, KCNJ6, KCNJ9 and SLC2A1/GLUT1. Interacts (via the FERM-like regions) with the WASH complex. Interacts with SNX1. Interacts with CYTIP. Interacts with DGKZ. Interacts with MCC. Interacts (via PDZ domains) with SLC9A3; directs SLC9A3 membrane insertion from early endosomes to the plasma membrane.

It is found in the early endosome membrane. Its subcellular location is the cytoplasm. The protein resides in the cytosol. Functionally, involved in the retrograde transport from endosome to plasma membrane, a trafficking pathway that promotes the recycling of internalized transmembrane proteins. Following internalization, endocytosed transmembrane proteins are delivered to early endosomes and recycled to the plasma membrane instead of being degraded in lysosomes. SNX27 specifically binds and directs sorting of a subset of transmembrane proteins containing a PDZ-binding motif at the C-terminus: following interaction with target transmembrane proteins, associates with the retromer complex, preventing entry into the lysosomal pathway, and promotes retromer-tubule based plasma membrane recycling. SNX27 also binds with the WASH complex. Interacts with membranes containing phosphatidylinositol-3-phosphate (PtdIns(3P)). May participate in establishment of natural killer cell polarity. Recruits CYTIP to early endosomes. The polypeptide is Sorting nexin-27 (SNX27) (Bos taurus (Bovine)).